The primary structure comprises 317 residues: Homoserine kinase (317 aa).

95–105 (PHSRGLGSSAA) provides a ligand contact to ATP.

This sequence belongs to the GHMP kinase family. Homoserine kinase subfamily.

It localises to the cytoplasm. It catalyses the reaction L-homoserine + ATP = O-phospho-L-homoserine + ADP + H(+). It functions in the pathway amino-acid biosynthesis; L-threonine biosynthesis; L-threonine from L-aspartate: step 4/5. Its function is as follows. Catalyzes the ATP-dependent phosphorylation of L-homoserine to L-homoserine phosphate. The polypeptide is Homoserine kinase (Mycolicibacterium smegmatis (strain ATCC 700084 / mc(2)155) (Mycobacterium smegmatis)).